Reading from the N-terminus, the 725-residue chain is N-alpha-acetyltransferase 35, NatC auxiliary subunit (725 aa).

Residues 548–573 (ERIMEEQQKGRSSKKTKKKKKVRPLS) form a disordered region. Residues 558-571 (RSSKKTKKKKKVRP) are compositionally biased toward basic residues.

The protein belongs to the MAK10 family. In terms of assembly, component of the N-terminal acetyltransferase C (NatC) complex, which is composed of NAA35, NAA38 and NAA30. In terms of tissue distribution, expressed in primary spermatocytes, basal epidermis, interstitial fibroblasts of skeletal muscle, and intestinal crypts.

It localises to the cytoplasm. In terms of biological role, auxillary component of the N-terminal acetyltransferase C (NatC) complex which catalyzes acetylation of N-terminal methionine residues. N-terminal acetylation protects proteins from ubiquitination and degradation by the N-end rule pathway. Involved in regulation of apoptosis and proliferation of smooth muscle cells. The polypeptide is N-alpha-acetyltransferase 35, NatC auxiliary subunit (Naa35) (Rattus norvegicus (Rat)).